The chain runs to 515 residues: Pre-glycoprotein polyprotein GP complex (515 aa).

G2 carries the N-myristoyl glycine; by host lipid modification. Topologically, residues 2 to 17 (GQVIGFFQSLPEIINE) are extracellular. The helical transmembrane segment at 18–33 (ALNIALICVALLATIK) threads the bilayer. Topologically, residues 34 to 58 (GMVNIWKSGLIQLLFFLTLAGRSCS) are cytoplasmic. Position 57 (C57) interacts with Zn(2+). Over 59–453 (HSFTIGRFHE…QGRTPLSLVD (395 aa)) the chain is Extracellular. Disulfide bonds link C87–C255, C300–C313, C322–C331, and C385–C406. N-linked (GlcNAc...) asparagine; by host glycosylation is found at N90, N112, N127, N180, and N248. N386, N394, and N416 each carry an N-linked (GlcNAc...) asparagine; by host glycan. A helical transmembrane segment spans residues 454–474 (LCFWSTLFYISTLFAHLVGFP). The Cytoplasmic portion of the chain corresponds to 475 to 515 (THRHLIGEGCPKPHRLTGSGICSCGHYGIPGKPVRWTKMSR). 6 residues coordinate Zn(2+): H476, H478, C484, H488, C496, and C498.

Belongs to the arenaviridae GPC protein family. As to quaternary structure, interacts with glycoprotein G2. Part of the GP complex (GP-C) together with glycoprotein G1 and glycoprotein G2. The GP-complex interacts with protein Z, which interacts with ribonucleocapsid; these interactions may induce virion budding. In terms of assembly, homotrimer; disulfide-linked. In pre-fusion state, G1 homotrimers bind G2 homotrimers via ionic interactions. Part of the GP complex (GP-C) together with glycoprotein G2 and the stable signal peptide. The GP-complex interacts with protein Z, which interacts with ribonucleocapsid; these interactions may induce virion budding. Homotrimer. Interacts with the stable signal peptide. In pre-fusion state, G2 homotrimers bind G1 homotrimers via ionic interactions. Part of the GP complex (GP-C) together with glycoprotein G1 and the stable signal peptide. Acidification in the endosome triggers rearrangements, which ultimately leads to a 6 helix bundle formed by the two heptad repeat domains (HR1 and HR2) in post-fusion state. The GP-complex interacts with protein Z, which interacts with ribonucleocapsid; these interactions may induce virion budding. Specific enzymatic cleavages in vivo yield mature proteins. GP-C polyprotein is cleaved in the endoplasmic reticulum by the host protease MBTPS1. Only cleaved glycoprotein is incorporated into virions. In terms of processing, the SSP remains stably associated with the GP complex following cleavage by signal peptidase and plays crucial roles in the trafficking of GP through the secretory pathway. Post-translationally, myristoylation is necessary for GP2-mediated fusion activity.

It is found in the virion membrane. It localises to the host endoplasmic reticulum membrane. The protein resides in the host Golgi apparatus membrane. The protein localises to the host cell membrane. Functions as a cleaved signal peptide that is retained as the third component of the GP complex (GP-C). Helps to stabilize the spike complex in its native conformation. The SSP is required for efficient glycoprotein expression, post-translational maturation cleavage of G1 and G2, glycoprotein transport to the cell surface plasma membrane, formation of infectious virus particles, and acid pH-dependent glycoprotein-mediated cell fusion. Functionally, forms the virion spikes together with glycoprotein G2. The glycoprotein spike trimers are connected to the underlying matrix. Mediates virus attachment to host receptor alpha-dystroglycan DAG1. This attachment induces virion internalization predominantly through clathrin- and caveolin-independent endocytosis. Its function is as follows. Forms the virion spikes together with glycoprotein G1. The glycoprotein spike trimers are connected to the underlying matrix. Class I viral fusion protein that directs fusion of viral and host endosomal membranes, leading to delivery of the nucleocapsid into the cytoplasm. Membrane fusion is mediated by irreversible conformational changes induced by acidification. In Latino mammarenavirus (isolate Rat/Bolivia/MARU 1924/1965) (LATV), this protein is Pre-glycoprotein polyprotein GP complex.